We begin with the raw amino-acid sequence, 580 residues long: MAFHVEGLIAIIVFYLLILLVGIWAAWRTKNSGSAEERSEAIIVGGRDIGLLVGGFTMTATWVGGGYINGTAEAVYVPGYGLAWAQAPIGYSLSLILGGLFFAKPMRSKGYVTMLDPFQQIYGKRMGGLLFIPALMGEMFWAAAIFSALGATISVIIDVDMHISVIISALIATLYTLVGGLYSVAYTDVVQLFCIFVGLWISVPFALSHPAVADIGFTAVHAKYQKPWLGTVDSSEVYSWLDSFLLLMLGGIPWQAYFQRVLSSSSATYAQVLSFLAAFGCLVMAIPAILIGAIGASTDWNQTAYGLPDPKTTEEADMILPIVLQYLCPVYISFFGLGAVSAAVMSSADSSILSASSMFARNIYQLSFRQNASDKEIVWVMRITVFVFGASATAMALLTKTVYGLWYLSSDLVYIVIFPQLLCVLFVKGTNTYGAVAGYVSGLFLRITGGEPYLYLQPLIFYPGYYPDDNGIYNQKFPFKTLAMVTSFLTNICISYLAKYLFESGTLPPKLDVFDAVVARHSEENMDKTILVKNENIKLDELALVKPRQSMTLSSTFTNKEAFLDVDSSPEGSGTEDNLQ.

At 1-6 (MAFHVE) the chain is on the extracellular side. The helical transmembrane segment at 7–27 (GLIAIIVFYLLILLVGIWAAW) threads the bilayer. Residues 28–48 (RTKNSGSAEERSEAIIVGGRD) are Cytoplasmic-facing. The chain crosses the membrane as a helical span at residues 49 to 69 (IGLLVGGFTMTATWVGGGYIN). Residues 70–81 (GTAEAVYVPGYG) lie on the Extracellular side of the membrane. Residues 82–102 (LAWAQAPIGYSLSLILGGLFF) form a helical membrane-spanning segment. Residues 103–125 (AKPMRSKGYVTMLDPFQQIYGKR) lie on the Cytoplasmic side of the membrane. Residues 126 to 146 (MGGLLFIPALMGEMFWAAAIF) form a helical membrane-spanning segment. At 147-164 (SALGATISVIIDVDMHIS) the chain is on the extracellular side. The chain crosses the membrane as a helical span at residues 165-185 (VIISALIATLYTLVGGLYSVA). The Cytoplasmic portion of the chain corresponds to 186 to 191 (YTDVVQ). A helical membrane pass occupies residues 192-212 (LFCIFVGLWISVPFALSHPAV). The Extracellular portion of the chain corresponds to 213–237 (ADIGFTAVHAKYQKPWLGTVDSSEV). A helical transmembrane segment spans residues 238-258 (YSWLDSFLLLMLGGIPWQAYF). Topologically, residues 259–274 (QRVLSSSSATYAQVLS) are cytoplasmic. Residues 275–295 (FLAAFGCLVMAIPAILIGAIG) traverse the membrane as a helical segment. At 296 to 317 (ASTDWNQTAYGLPDPKTTEEAD) the chain is on the extracellular side. N-linked (GlcNAc...) asparagine glycosylation is present at Asn-301. The helical transmembrane segment at 318–338 (MILPIVLQYLCPVYISFFGLG) threads the bilayer. At 339–376 (AVSAAVMSSADSSILSASSMFARNIYQLSFRQNASDKE) the chain is on the cytoplasmic side. Residues 377 to 397 (IVWVMRITVFVFGASATAMAL) form a helical membrane-spanning segment. The Extracellular segment spans residues 398 to 406 (LTKTVYGLW). The helical transmembrane segment at 407 to 427 (YLSSDLVYIVIFPQLLCVLFV) threads the bilayer. Over 428 to 435 (KGTNTYGA) the chain is Cytoplasmic. The helical transmembrane segment at 436–456 (VAGYVSGLFLRITGGEPYLYL) threads the bilayer. The Extracellular segment spans residues 457–481 (QPLIFYPGYYPDDNGIYNQKFPFKT). Residues 482-502 (LAMVTSFLTNICISYLAKYLF) form a helical membrane-spanning segment. The segment at 502 to 580 (FESGTLPPKL…EGSGTEDNLQ (79 aa)) is mediates interaction with SEC14L1. Residues 503–580 (ESGTLPPKLD…EGSGTEDNLQ (78 aa)) lie on the Cytoplasmic side of the membrane. Positions 527–532 (DKTILV) match the Dileucine-like motif motif.

It belongs to the sodium:solute symporter (SSF) (TC 2.A.21) family. Homooligomerizes at cell surface. Interacts with SEC14L1; may regulate SLC5A7. Post-translationally, phosphorylated. As to expression, expressed in putamen, spinal cord and medulla. Expressed in cholinergic neurons.

It localises to the presynaptic cell membrane. The protein resides in the cell projection. It is found in the axon. Its subcellular location is the early endosome membrane. The protein localises to the cytoplasmic vesicle. It localises to the secretory vesicle. The protein resides in the synaptic vesicle membrane. It catalyses the reaction choline(out) + n Na(+)(out) = choline(in) + n Na(+)(in). Its activity is regulated as follows. Choline uptake activity is regulated by SLC5A7/CHT1 internalization (inactive form) from the cell surface and recycling of internalized SLC5A7/CHT1 into the cell surface (active form). Activated by extracellular chloride ion. Specifically inhibited by nanomolar concentrations of hemicholinium 3. Functionally, high-affinity Na(+)-coupled choline transmembrane symporter. Functions as an electrogenic, voltage-dependent transporter with variable charge/choline stoichiometry. Choline uptake and choline-induced current is also Cl(-)-dependent where Cl(-) is likely a regulatory ion rather than cotransported ion. Plays a critical role in acetylcholine (ACh) synthesis by taking up the substrate choline from the synaptic cleft into the presynaptic nerve terminals after neurotransmitter release. SLC5A7/CHT1-mediated choline high-affinity transport in cholinergic neurons is the rate-limiting step for production of ACh, thereby facilitating communication by subsequent action potentials. Localized predominantly in presynaptic terminal intracellular organelles, and translocated to the plasma membrane in active form in response to neuronal activity. This is High affinity choline transporter 1 from Homo sapiens (Human).